A 135-amino-acid polypeptide reads, in one-letter code: ATP synthase epsilon chain 1 (135 aa).

The protein belongs to the ATPase epsilon chain family. In terms of assembly, F-type ATPases have 2 components, CF(1) - the catalytic core - and CF(0) - the membrane proton channel. CF(1) has five subunits: alpha(3), beta(3), gamma(1), delta(1), epsilon(1). CF(0) has three main subunits: a, b and c.

The protein localises to the cell inner membrane. Produces ATP from ADP in the presence of a proton gradient across the membrane. This chain is ATP synthase epsilon chain 1, found in Nitrobacter hamburgensis (strain DSM 10229 / NCIMB 13809 / X14).